A 121-amino-acid polypeptide reads, in one-letter code: Small ribosomal subunit protein uS13 (121 aa).

Residues 94–121 are disordered; sequence GLPVRGQKTRNNAHTVKGKPKAIAGKKK. Basic residues predominate over residues 109–121; the sequence is VKGKPKAIAGKKK.

Belongs to the universal ribosomal protein uS13 family. As to quaternary structure, part of the 30S ribosomal subunit. Forms a loose heterodimer with protein S19. Forms two bridges to the 50S subunit in the 70S ribosome.

Located at the top of the head of the 30S subunit, it contacts several helices of the 16S rRNA. In the 70S ribosome it contacts the 23S rRNA (bridge B1a) and protein L5 of the 50S subunit (bridge B1b), connecting the 2 subunits; these bridges are implicated in subunit movement. Contacts the tRNAs in the A and P-sites. The sequence is that of Small ribosomal subunit protein uS13 from Onion yellows phytoplasma (strain OY-M).